Here is a 610-residue protein sequence, read N- to C-terminus: Membrane protein insertase YidC (610 aa).

The helical transmembrane segment at phenylalanine 7–glycine 27 threads the bilayer. The tract at residues glutamine 36–glycine 82 is disordered. Residues arginine 44–alanine 55 show a composition bias toward low complexity. 5 helical membrane-spanning segments follow: residues phenylalanine 358 to isoleucine 378, asparagine 387 to alanine 407, tryptophan 458 to isoleucine 478, threonine 510 to leucine 530, and isoleucine 546 to valine 566.

This sequence belongs to the OXA1/ALB3/YidC family. Type 1 subfamily. In terms of assembly, interacts with the Sec translocase complex via SecD. Specifically interacts with transmembrane segments of nascent integral membrane proteins during membrane integration.

It localises to the cell inner membrane. Functionally, required for the insertion and/or proper folding and/or complex formation of integral membrane proteins into the membrane. Involved in integration of membrane proteins that insert both dependently and independently of the Sec translocase complex, as well as at least some lipoproteins. Aids folding of multispanning membrane proteins. The chain is Membrane protein insertase YidC from Brucella melitensis biotype 1 (strain ATCC 23456 / CCUG 17765 / NCTC 10094 / 16M).